A 51-amino-acid polypeptide reads, in one-letter code: U-Asilidin(1)-Mar1a (51 aa).

The N-terminal stretch at 1-23 (MANYIEVFSVLAIIFATVLAALA) is a signal peptide. 3 disulfide bridges follow: C26–C40, C33–C44, and C39–C49.

Belongs to the asilidin-1 family. In terms of tissue distribution, expressed by the venom gland. Is the most highly expressed peptide and is around 3000 times higher expressed in the thoracic glands compared to its body tissues.

Its subcellular location is the secreted. Induces neurotoxic effect on honeybees, including slow movements, disorientation and paralysis. Since it provokes similar symptoms than omega-atracotoxin, it is probable that it acts in the same way by inhibiting voltage-gated calcium channels. The chain is U-Asilidin(1)-Mar1a from Machimus arthriticus (Breck robberfly).